The primary structure comprises 178 residues: Large ribosomal subunit protein bL25 (178 aa).

The protein belongs to the bacterial ribosomal protein bL25 family. CTC subfamily. In terms of assembly, part of the 50S ribosomal subunit; part of the 5S rRNA/L5/L18/L25 subcomplex. Contacts the 5S rRNA. Binds to the 5S rRNA independently of L5 and L18.

This is one of the proteins that binds to the 5S RNA in the ribosome where it forms part of the central protuberance. The polypeptide is Large ribosomal subunit protein bL25 (Nitratiruptor sp. (strain SB155-2)).